The primary structure comprises 397 residues: MAKAKFERTKPHCNIGTIGHIDHGKTTLTAAISKVLHDKYPELNEESPFDQIDKAPEERQRGITISIAHIEYQTEKRHYAHVDCPGHADYVKNMITGAAQMDGAILVVAATDGPMPQTREHVLLARQVGVPAIVVALNKCDMVDDEELIELVEMEVRELLTSQEFDGDNCPVVRISAFQALQGDEKWTQSILDLMDAVDEYIPQPERDLDKPFLMPIEDVFTITGRGTVVTGRVERGVVKTGEEVEIVGIHEKTQKTTVTGVEMFRKILDEGRAGENVGVLLRGTKKEDVVRGMVLSKPGSTTPHTDFEGQVYVLKKDEGGRHKPFFSHYSPQFYFRTTDVTGTVELPEGTEMVMPGDNTDMTVHLIHPVAMEDQLKFAIREGGRTVGAGRVTKIIK.

In terms of domain architecture, tr-type G spans Lys10–Glu206. Residues Gly19–Thr26 are G1. Gly19–Thr26 is a GTP binding site. Thr26 is a binding site for Mg(2+). Residues Gly62–Ser66 are G2. The interval Asp83–Gly86 is G3. GTP is bound by residues Asp83–His87 and Asn138–Asp141. The tract at residues Asn138–Asp141 is G4. The interval Ser176–Phe178 is G5.

Belongs to the TRAFAC class translation factor GTPase superfamily. Classic translation factor GTPase family. EF-Tu/EF-1A subfamily. In terms of assembly, monomer.

Its subcellular location is the cytoplasm. The catalysed reaction is GTP + H2O = GDP + phosphate + H(+). Its function is as follows. GTP hydrolase that promotes the GTP-dependent binding of aminoacyl-tRNA to the A-site of ribosomes during protein biosynthesis. The protein is Elongation factor Tu of Cutibacterium acnes (strain DSM 16379 / KPA171202) (Propionibacterium acnes).